We begin with the raw amino-acid sequence, 126 residues long: LWamide neuropeptides (126 aa).

Positions 1-2 (KR) are cleaved as a propeptide — 1. Residues 1–126 (KRQQPGLWGR…KSAIPKAKPQ (126 aa)) are disordered. The residue at position 8 (tryptophan 8) is a Tryptophan amide. Positions 11-15 (SADPQ) are cleaved as a propeptide — 2. Residues tryptophan 20 and tryptophan 29 each carry the tryptophan amide modification. A propeptide spans 32–36 (SADPQ) (2). Tryptophan amide is present on residues tryptophan 41 and tryptophan 50. A propeptide spans 53–57 (SADPQ) (2). Residues tryptophan 62 and tryptophan 71 each carry the tryptophan amide modification. A propeptide spans 74–78 (SADPQ) (2). Position 83 is a tryptophan amide (tryptophan 83). Residues 86–93 (SAGSGKRQ) constitute a propeptide, 3. Position 99 is a tryptophan amide (tryptophan 99). Positions 102–126 (SAEPPQYKELEDLKQKSAIPKAKPQ) are cleaved as a propeptide — 4. Residues 107–116 (QYKELEDLKQ) are compositionally biased toward basic and acidic residues.

This sequence belongs to the LWamide neuropeptide family.

Its subcellular location is the secreted. Metamorphosin A may be part of an internal signaling system involved in control of metamorphosis. The chain is LWamide neuropeptides from Anemonia sulcata (Mediterranean snakelocks sea anemone).